We begin with the raw amino-acid sequence, 731 residues long: Inclusion body clearance protein IML2 (731 aa).

Residues 1–26 form a disordered region; the sequence is MFRVFGSFGSKGNQSSGEEQSTKTKQ. Positions 10-26 are enriched in polar residues; sequence SKGNQSSGEEQSTKTKQ. Residues S265, S268, and S378 each carry the phosphoserine modification. T380 is subject to Phosphothreonine. Phosphoserine is present on residues S383 and S392.

The protein belongs to the IML2 family. As to quaternary structure, interacts with lipid droplet proteins PET10 and PDR16.

The protein resides in the cytoplasm. It localises to the nucleus. Inclusion body (IB) resident protein that interacts strongly with lipid droplet (LD) proteins. Involved in LD-mediated IB clearing after protein folding stress, probably by enabling access to the IBs of an LD-stored soluble sterol derivative that acts as a chaperone in inclusion clearing. The polypeptide is Inclusion body clearance protein IML2 (Saccharomyces cerevisiae (strain ATCC 204508 / S288c) (Baker's yeast)).